A 240-amino-acid polypeptide reads, in one-letter code: Bidirectional sugar transporter SWEET7c (240 aa).

Topologically, residues M1–G12 are extracellular. The MtN3/slv 1 domain maps to V10–L48. A helical membrane pass occupies residues I13–I33. At I34–P46 the chain is on the cytoplasmic side. A helical membrane pass occupies residues I47 to F67. The Extracellular portion of the chain corresponds to F68–K78. Residues M79 to L99 traverse the membrane as a helical segment. The Cytoplasmic portion of the chain corresponds to G100–S108. Residues L109–I129 form a helical membrane-spanning segment. Positions I110 to T191 constitute a MtN3/slv 2 domain. Topologically, residues M130 to M140 are extracellular. A helical membrane pass occupies residues P141–I161. The Cytoplasmic portion of the chain corresponds to R162–D164. Residues I165–Y185 traverse the membrane as a helical segment. Residues A186 to P240 are Extracellular-facing. N225 and N235 each carry an N-linked (GlcNAc...) asparagine glycan.

It belongs to the SWEET sugar transporter family. Forms homooligomers and/or heterooligomers.

The protein resides in the cell membrane. In terms of biological role, mediates both low-affinity uptake and efflux of sugar across the plasma membrane. This is Bidirectional sugar transporter SWEET7c (SWEET7C) from Oryza sativa subsp. indica (Rice).